Here is a 623-residue protein sequence, read N- to C-terminus: Alpha-1,2-mannosyltransferase Alg9 (623 aa).

A run of 8 helical transmembrane segments spans residues 152-172 (LIFY…ERYM), 193-223 (LFSV…AAWW), 229-254 (FAIF…PLVL), 266-284 (FVQW…MIAI), 326-348 (FLNF…IDYL), 360-378 (FPHY…VFFA), 390-410 (IYPL…RIFF), and 431-452 (FIAI…FALY).

It belongs to the glycosyltransferase 22 family.

Its subcellular location is the endoplasmic reticulum membrane. It carries out the reaction an alpha-D-Man-(1-&gt;2)-alpha-D-Man-(1-&gt;2)-alpha-D-Man-(1-&gt;3)-[alpha-D-Man-(1-&gt;3)-alpha-D-Man-(1-&gt;6)]-beta-D-Man-(1-&gt;4)-beta-D-GlcNAc-(1-&gt;4)-alpha-D-GlcNAc-diphospho-di-trans,poly-cis-dolichol + a di-trans,poly-cis-dolichyl beta-D-mannosyl phosphate = an alpha-D-Man-(1-&gt;2)-alpha-D-Man-(1-&gt;2)-alpha-D-Man-(1-&gt;3)-[alpha-D-Man-(1-&gt;2)-alpha-D-Man-(1-&gt;3)-alpha-D-Man-(1-&gt;6)]-beta-D-Man-(1-&gt;4)-beta-D-GlcNAc-(1-&gt;4)-alpha-D-GlcNAc-diphospho-di-trans,poly-cis-dolichol + a di-trans,poly-cis-dolichyl phosphate + H(+). The enzyme catalyses an alpha-D-Man-(1-&gt;2)-alpha-D-Man-(1-&gt;2)-alpha-D-Man-(1-&gt;3)-[alpha-D-Man-(1-&gt;2)-alpha-D-Man-(1-&gt;3)-[alpha-D-Man-(1-&gt;6)]-alpha-D-Man-(1-&gt;6)]-beta-D-Man-(1-&gt;4)-beta-D-GlcNAc-(1-&gt;4)-alpha-D-GlcNAc-diphospho-di-trans,poly-cis-dolichol + a di-trans,poly-cis-dolichyl beta-D-mannosyl phosphate = an alpha-D-Man-(1-&gt;2)-alpha-D-Man-(1-&gt;2)-alpha-D-Man-(1-&gt;3)-[alpha-D-Man-(1-&gt;2)-alpha-D-Man-(1-&gt;3)-[alpha-D-Man-(1-&gt;2)-alpha-D-Man-(1-&gt;6)]-alpha-D-Man-(1-&gt;6)]-beta-D-Man-(1-&gt;4)-beta-D-GlcNAc-(1-&gt;4)-alpha-D-GlcNAc-diphospho-di-trans,poly-cis-dolichol + a di-trans,poly-cis-dolichyl phosphate + H(+). The protein operates within protein modification; protein glycosylation. Functionally, probable alpha-1,2-mannosyltransferase involved in the N-glycosylation pathway. Probably involved in glycosylation of the TNF receptor grnd, regulating its ligand affinity. Required for normal epithelial growth and architecture. Suppressor of JNK-dependent intestinal stem cell proliferation. The protein is Alpha-1,2-mannosyltransferase Alg9 of Drosophila melanogaster (Fruit fly).